Consider the following 318-residue polypeptide: 2-keto-3-deoxygluconate permease (318 aa).

10 helical membrane-spanning segments follow: residues 10–30 (IPGGLMLVPLFLGALCNTFTP), 42–62 (GLITGTIPILAVWFFCMGASI), 76–96 (VLVITKLATAWVVALIAGTFL), 105–125 (LLAGISVLALVAAMDMTNGGL), 139–159 (AGAFVLMSLESGPLMTMVILG), 162–182 (GIATFEPQLFVGAVLPFLIGF), 199–219 (VQTLIPFFAFALGNTINLAVI), 224–244 (FAGIFLGVLVIVVTGIPLIIA), 263–283 (AGAAVATPLLIANMAPEFAPV), and 289–309 (ALVATSVIVTSVLVPVITALW).

The protein belongs to the KdgT transporter family.

The protein localises to the cell inner membrane. It carries out the reaction 2-dehydro-3-deoxy-D-gluconate(in) + H(+)(in) = 2-dehydro-3-deoxy-D-gluconate(out) + H(+)(out). Its function is as follows. Catalyzes the proton-dependent uptake of 2-keto-3-deoxygluconate (KDG) into the cell. The protein is 2-keto-3-deoxygluconate permease of Pectobacterium carotovorum subsp. carotovorum (strain PC1).